The primary structure comprises 185 residues: uncharacterized protein (185 aa).

4 consecutive transmembrane segments (helical) span residues 5–25, 63–83, 97–117, and 149–169; these read SFLI…RIWL, LATV…LILI, FLGL…VLLI, and IIPA…GLQF.

This sequence belongs to the YggT family.

Its subcellular location is the cell membrane. This is an uncharacterized protein from Vibrio alginolyticus.